We begin with the raw amino-acid sequence, 109 residues long: Iron-sulfur cluster assembly protein CyaY (109 aa).

Belongs to the frataxin family.

Functionally, involved in iron-sulfur (Fe-S) cluster assembly. May act as a regulator of Fe-S biogenesis. The protein is Iron-sulfur cluster assembly protein CyaY of Bordetella bronchiseptica (strain ATCC BAA-588 / NCTC 13252 / RB50) (Alcaligenes bronchisepticus).